The following is a 113-amino-acid chain: Biotrophy-associated secreted protein 3 (113 aa).

The signal sequence occupies residues 1 to 20; the sequence is MQFSTVSFAIFAILPAMVAA.

It is found in the secreted. In terms of biological role, secreted effector involved in biotrophic colonization of plant cells. The protein is Biotrophy-associated secreted protein 3 of Pyricularia oryzae (strain 70-15 / ATCC MYA-4617 / FGSC 8958) (Rice blast fungus).